The following is a 260-amino-acid chain: Pectate lyase H (260 aa).

Positions 1–17 (MFIKNGLLLSLATSVLA) are cleaved as a signal peptide.

This sequence belongs to the polysaccharide lyase 3 family. Ca(2+) serves as cofactor.

Its subcellular location is the secreted. It catalyses the reaction Eliminative cleavage of (1-&gt;4)-alpha-D-galacturonan to give oligosaccharides with 4-deoxy-alpha-D-galact-4-enuronosyl groups at their non-reducing ends.. Its function is as follows. Pectinolytic enzyme consist of four classes of enzymes: pectin lyase, polygalacturonase, pectin methylesterase and rhamnogalacturonase. Among pectinolytic enzymes, pectin lyase is the most important in depolymerization of pectin, since it cleaves internal glycosidic bonds of highly methylated pectins. Favors pectate, the anion, over pectin, the methyl ester. This chain is Pectate lyase H (plyH), found in Emericella nidulans (strain FGSC A4 / ATCC 38163 / CBS 112.46 / NRRL 194 / M139) (Aspergillus nidulans).